The primary structure comprises 453 residues: Obtusifoliol 14-alpha demethylase (453 aa).

Cys395 is a heme binding site.

This sequence belongs to the cytochrome P450 family. It depends on heme as a cofactor.

Its subcellular location is the membrane. The catalysed reaction is a 14alpha-methyl steroid + 3 reduced [NADPH--hemoprotein reductase] + 3 O2 = a Delta(14) steroid + formate + 3 oxidized [NADPH--hemoprotein reductase] + 4 H2O + 4 H(+). The protein operates within steroid biosynthesis; zymosterol biosynthesis; zymosterol from lanosterol: step 1/6. Functionally, catalyzes the 14-alpha demethylation of obtusifoliol to 4 alpha-methyl-5 alpha-ergosta-8,14,24(28)-trien-3 beta-ol. This is Obtusifoliol 14-alpha demethylase (CYP51) from Triticum aestivum (Wheat).